The sequence spans 819 residues: Ferric-pyoverdine 358 receptor (819 aa).

Residues 1–47 (MSKPLPSALNPLAKALLIRHSLRPRHALSRIGMGLALSSALVFQVQA) form the signal peptide. A TonB box motif is present at residues 115–122 (NTVTVTAS). The region spanning 166 to 276 (SIRETPQTIT…PSAVVNVIRK (111 aa)) is the TBDR plug domain. The TBDR beta-barrel domain occupies 281–819 (EFKSHIQAGV…NATVTLRYDF (539 aa)). Residues 802-819 (YGHYGAPRNATVTLRYDF) carry the TonB C-terminal box motif.

This sequence belongs to the TonB-dependent receptor family.

It localises to the cell outer membrane. Its function is as follows. Specific receptor for the siderophore ferric pyoverdine (pseudobactin) 358. In Pseudomonas putida (Arthrobacter siderocapsulatus), this protein is Ferric-pyoverdine 358 receptor (pupA).